Reading from the N-terminus, the 207-residue chain is Coiled-coil domain-containing protein 124 homolog (207 aa).

A disordered region spans residues 1–90 (MGNPKKRAEK…KAAKKNSSLD (90 aa)). Positions 5-71 (KKRAEKAEAA…RLEKEEMESL (67 aa)) form a coiled coil. Basic and acidic residues-rich tracts occupy residues 9-28 (EKAE…KKDA) and 41-65 (NKKE…RLEK).

Belongs to the CCDC124 family. In terms of assembly, associates with translationally inactive ribosomes in the nonrotated state.

The protein resides in the cytoplasm. Its subcellular location is the nucleus. Ribosome-binding protein involved in ribosome hibernation by associating with translationally inactive ribosomes. Required for translational recovery after starvation from stationary phase. May facilitate rapid translation reactivation by stabilizing the recycling-competent state of inactive ribosomes. This is Coiled-coil domain-containing protein 124 homolog from Schizosaccharomyces pombe (strain 972 / ATCC 24843) (Fission yeast).